We begin with the raw amino-acid sequence, 295 residues long: Protease HtpX (295 aa).

A run of 2 helical transmembrane segments spans residues 4–24 (ILLFVATNLAVVLVASITLSL) and 41–61 (SSLLVFCAVFGFAGSLVSLFI). His147 is a Zn(2+) binding site. Glu148 is an active-site residue. His151 provides a ligand contact to Zn(2+). The next 2 helical transmembrane spans lie at 158 to 178 (VTLALVQGVVNTFVMFFARII) and 199 to 219 (VATIVAELILGILASMIVMWF). Glu224 contributes to the Zn(2+) binding site.

This sequence belongs to the peptidase M48B family. Zn(2+) serves as cofactor.

The protein localises to the cell inner membrane. This is Protease HtpX from Pseudomonas putida (strain GB-1).